A 568-amino-acid polypeptide reads, in one-letter code: Phosphoprotein (568 aa).

Disordered stretches follow at residues 1-23 and 38-320; these read MDQDAFILKEDSEVEREAPGGRE and SEPT…GIGE. The span at 7–20 shows a compositional bias: basic and acidic residues; that stretch reads ILKEDSEVEREAPG. The interval 33-41 is N0 binding; it reads DAVLSSEPT. Over residues 50-59 the composition is skewed to polar residues; that stretch reads LHNTINTPQG. Position 68 is a phosphoserine; by host (S68). Over residues 83–101 the composition is skewed to basic and acidic residues; it reads RSGEESRVSGRTSKPEAEA. Phosphoserine; by host is present on S125. Residues 150–168 are compositionally biased toward basic and acidic residues; that stretch reads GIEDENREMAAHPDKRGED. A compositionally biased stretch (polar residues) spans 191-206; the sequence is ASNNGRSMEPGSSHSA. Phosphoserine; by host occurs at positions 192, 249, 257, and 260. The interval 344–411 is multimerization; sequence FESSRDASYV…SFRDIYKRFS (68 aa). The stretch at 364–429 forms a coiled coil; that stretch reads YAEMTFNVCG…LLMSNLSTLH (66 aa). Positions 412-445 are l protein binding; that stretch reads EYQKEQNSLLMSNLSTLHIITDRGGKTDNTDSLT. A phosphoserine; by host mark is found at S447 and S449. Residues 479–568 form an interaction with the nucleocapsid (N-RNA) region; sequence DLIREDEFRD…VEEDIESLTN (90 aa). Positions 496–516 are disordered; sequence QERDTEPRASNASRLLPSKEK. A formation of N-RNA complex involved in transcription and replication region spans residues 547 to 566; it reads KTDQEVKAVMELVEEDIESL.

Belongs to the respirovirus P protein family. As to quaternary structure, homotetramer. Interacts (via multimerization domain) with polymerase L; this interaction forms the polymerase complex. Interacts (via N-terminus) with N0; this interaction allows P to chaperon N0 before encapsidation and form the N-P complex. Interacts (via C-terminus) with N-RNA template; this interaction positions the polymerase on the template. Phosphorylated by PKC/PRKCZ, and other unknown kinases. Phosphorylation is necessary for viral transcription and replication. The N-terminus contains the majority of phosphorylated sites. Ser-249 is the major site of phosphorylation, but is not necessary for most functions.

The protein resides in the host cytoplasm. Essential cofactor of the RNA polymerase L that plays a central role in the transcription and replication by forming the polymerase complex with RNA polymerase L and recruiting L to the genomic N-RNA template for RNA synthesis. Also plays a central role in the encapsidation of nascent RNA chains by forming the encapsidation complex with the nucleocapsid protein N (N-P complex). Acts as a chaperone for newly synthesized free N protein, so-called N0, allowing encapsidation of nascent RNA chains during replication. The nucleoprotein protein N prevents excessive phosphorylation of P, which leads to down-regulation of viral transcription/ replication. Participates, together with N, in the formation of viral factories (viroplasms), which are large inclusions in the host cytoplasm where replication takes place. Recruits host PI4KB and remodel the host endoplasmic reticulum membrane to form viral replication factories. The polypeptide is Phosphoprotein (P/V/C) (Cavia cutleri (Guinea pig)).